Reading from the N-terminus, the 110-residue chain is Large ribosomal subunit protein uL24 (110 aa).

Belongs to the universal ribosomal protein uL24 family. As to quaternary structure, part of the 50S ribosomal subunit.

One of two assembly initiator proteins, it binds directly to the 5'-end of the 23S rRNA, where it nucleates assembly of the 50S subunit. Its function is as follows. One of the proteins that surrounds the polypeptide exit tunnel on the outside of the subunit. The sequence is that of Large ribosomal subunit protein uL24 from Roseiflexus castenholzii (strain DSM 13941 / HLO8).